Reading from the N-terminus, the 199-residue chain is Probable GTP-binding protein EngB (199 aa).

The region spanning 28–199 (DLPEIALAGR…ESWDTILEYL (172 aa)) is the EngB-type G domain. GTP is bound by residues 36-43 (GRSNVGKS), 63-67 (GKTQL), 81-84 (DVPG), 148-151 (TKAD), and 180-182 (FSS). Positions 43 and 65 each coordinate Mg(2+).

Belongs to the TRAFAC class TrmE-Era-EngA-EngB-Septin-like GTPase superfamily. EngB GTPase family. Mg(2+) serves as cofactor.

Its function is as follows. Necessary for normal cell division and for the maintenance of normal septation. This chain is Probable GTP-binding protein EngB, found in Streptococcus equi subsp. zooepidemicus (strain H70).